Consider the following 354-residue polypeptide: MEKRIVCLAGDGVGPEVMESAKGVLHMVERLYGHHFHLQDEHFGGVAIDLTGQPLPQRTLAACLASDAVLLGAVGGPRWDGAKERPEKGLLALRKGLGVFANVRPVTVESATAHLSPLKKADEIDFVVVRELTGGIYFSYPKKRTDEVATDTLTYHRHEIERIVSYAFQLASKRKKKVTSIDKANVLESSKLWRTVTEEVALRYPDVELEHILVDAAAMELIRNPGRFDVIVTENLFGDILSDEASVLAGSLGMLPSASHAEKGPSLYEPIHGSAPDIAGKNKANPIAMMRSVAMMLGQSFGLTREGCAIEEAISAVLKSGKCTADIGGAETTTSFTKAVMQEMEEQALVGRGR.

76 to 87 (GPRWDGAKERPE) contacts NAD(+). Residues R94, R104, R130, and D215 each coordinate substrate. Mg(2+)-binding residues include D215, D239, and D243. 273–285 (GSAPDIAGKNKAN) contributes to the NAD(+) binding site.

It belongs to the isocitrate and isopropylmalate dehydrogenases family. LeuB type 1 subfamily. As to quaternary structure, homodimer. Mg(2+) is required as a cofactor. The cofactor is Mn(2+).

The protein resides in the cytoplasm. It carries out the reaction (2R,3S)-3-isopropylmalate + NAD(+) = 4-methyl-2-oxopentanoate + CO2 + NADH. The protein operates within amino-acid biosynthesis; L-leucine biosynthesis; L-leucine from 3-methyl-2-oxobutanoate: step 3/4. Catalyzes the oxidation of 3-carboxy-2-hydroxy-4-methylpentanoate (3-isopropylmalate) to 3-carboxy-4-methyl-2-oxopentanoate. The product decarboxylates to 4-methyl-2 oxopentanoate. This chain is 3-isopropylmalate dehydrogenase, found in Bacillus thuringiensis subsp. konkukian (strain 97-27).